Here is a 288-residue protein sequence, read N- to C-terminus: Alpha/beta hydrolase domain-containing protein 17B (288 aa).

Catalysis depends on charge relay system residues Ser-170, Asp-235, and His-264. Ser-282 carries the post-translational modification Phosphoserine.

Belongs to the AB hydrolase superfamily. ABHD17 family. Post-translationally, palmitoylated on cysteine residues located in a cysteine cluster at the N-terminus which promotes membrane localization. Palmitoylation is required for post-synaptic localization and for depalmitoylating activity towards DLG4/PSD95. Expressed in brain.

The protein localises to the cell membrane. It is found in the recycling endosome membrane. The protein resides in the cell projection. It localises to the dendritic spine. Its subcellular location is the postsynaptic density membrane. The enzyme catalyses S-hexadecanoyl-L-cysteinyl-[protein] + H2O = L-cysteinyl-[protein] + hexadecanoate + H(+). Hydrolyzes fatty acids from S-acylated cysteine residues in proteins. Has depalmitoylating activity towards DLG4/PSD95. Has depalmitoylating activity towards GAP43. Has depalmitoylating activity towards MAP6. Has depalmitoylating activity towards NRAS. The protein is Alpha/beta hydrolase domain-containing protein 17B of Mus musculus (Mouse).